The primary structure comprises 226 residues: Choline transport system permease protein OpuBD (226 aa).

The 181-residue stretch at 22–202 (FGRHFLMSAY…VMAVGADLLM (181 aa)) folds into the ABC transmembrane type-1 domain. Helical transmembrane passes span 27-47 (LMSA…GILI), 52-72 (RLSA…ALAM), 73-93 (LAVL…SLFL), 148-168 (ALVI…GGLG), and 182-202 (AIIL…DLLM).

Belongs to the binding-protein-dependent transport system permease family. CysTW subfamily.

It is found in the cell membrane. Functionally, involved in a high affinity multicomponent binding-protein-dependent transport system for choline; probably responsible for the translocation of the substrate across the membrane. The protein is Choline transport system permease protein OpuBD (opuBD) of Bacillus subtilis (strain 168).